The chain runs to 450 residues: MLDKLGQNLSDALNKIKNATFVDKKLVKEVIKDIQKALIQSDVNVKLVFNMSKEIERKAIEEAPPKGLSKKEHIVKIVYDELVKLLGETTQKLELDPSKKSVILLIGIQGSGKTTSAAKLARYIQKKGLRPGLIAADVYRPAAYQQLKQLSEKINVPLFGDETRTKTPVDITKEGMEKLKKVDVIIIDTAGRHKEEESLLAEMKEMKDLTNPNEIILVIDGTLGQQAKNQAKAFKESVSEIGSILVTKLDGSAKGGGALSAVAEINAPIKFIGTGEGVDNLEQFDPKKFISRILGLGDLDSLLEKTEDIMDESTEESIDSILKGKFTLIELYAQLETISKMGPMKQILSMIPGMGGNLPKEAAQLTEDKLKRYKIMMDSMTLEEKENPELIKTSRLQRIAKGAGVKQDEIKDLLKYYSTTKNAFGNLKRGKMPKMGGQMGQIMRQLMYKD.

Residues 107–114 (GIQGSGKT), 188–192 (DTAGR), and 247–250 (TKLD) contribute to the GTP site.

Belongs to the GTP-binding SRP family. SRP54 subfamily. Part of the signal recognition particle protein translocation system, which is composed of SRP and FtsY. Archaeal SRP consists of a 7S RNA molecule of 300 nucleotides and two protein subunits: SRP54 and SRP19.

The protein resides in the cytoplasm. The catalysed reaction is GTP + H2O = GDP + phosphate + H(+). Functionally, involved in targeting and insertion of nascent membrane proteins into the cytoplasmic membrane. Binds to the hydrophobic signal sequence of the ribosome-nascent chain (RNC) as it emerges from the ribosomes. The SRP-RNC complex is then targeted to the cytoplasmic membrane where it interacts with the SRP receptor FtsY. This chain is Signal recognition particle 54 kDa protein, found in Methanococcus maripaludis (strain C5 / ATCC BAA-1333).